The sequence spans 464 residues: NADH-ubiquinone oxidoreductase chain 4 (464 aa).

13 consecutive transmembrane segments (helical) span residues 1 to 21 (MMIT…VIPQ), 63 to 83 (SISA…LIAS), 98 to 118 (FIII…ALEL), 119 to 139 (LLFY…ITRW), 152 to 172 (FMFY…AIYI), 197 to 217 (IWWA…GFHL), 227 to 247 (PVAG…YGLI), 261 to 281 (LSLA…IICV), 288 to 308 (ALIA…IFSS), 314 to 334 (NGAL…FSLA), 355 to 375 (ILPL…GLPP), 389 to 409 (LIAW…FGAI), and 443 to 463 (LHTL…ITWL).

This sequence belongs to the complex I subunit 4 family.

Its subcellular location is the mitochondrion membrane. The enzyme catalyses a ubiquinone + NADH + 5 H(+)(in) = a ubiquinol + NAD(+) + 4 H(+)(out). In terms of biological role, core subunit of the mitochondrial membrane respiratory chain NADH dehydrogenase (Complex I) that is believed to belong to the minimal assembly required for catalysis. Complex I functions in the transfer of electrons from NADH to the respiratory chain. The immediate electron acceptor for the enzyme is believed to be ubiquinone. The chain is NADH-ubiquinone oxidoreductase chain 4 (ND4) from Paracentrotus lividus (Common sea urchin).